A 400-amino-acid chain; its full sequence is MTTLGTPLSPSATRVLLLGSGELGKEVAIELQRFGVEVIAADRYANAPAMQVAHRSHVLDMLDPIALRTLIANERPHLIVPEIEAIHTEALVALEREQGQKVIPTARAARLTMDREGIRRLAAETLGLPTSPYRFVDTVEEYRDAIAAVGLPCVVKPVMSSSGKGQSTLRSEADIDAAWEYAQTGGRAGAGRCIVEGFIDFDYEITLLTVRHAGGTSYCDPIGHWQQDGDYRESWQPQPMSAAALRRSQQIAKAITDDLGGRGLFGVELFVKGDEVWFSEVSPRPHDTGLVTLVSQELSEFALHARAILGLPVGAQDGGVIRQAGPSASCALLAHGNGVPAFDNVAEALRDPDTALRLFGKPRVDGHRRVGVTLARADSVDAAREKARVAAAALTIQLQA.

N(1)-(5-phospho-beta-D-ribosyl)glycinamide contacts are provided by residues 22-23 and Glu82; that span reads EL. ATP-binding positions include Arg115, Lys156, 161–166, 196–199, and Glu204; these read SSGKGQ and EGFI. The ATP-grasp domain occupies 120-309; that stretch reads RLAAETLGLP…EFALHARAIL (190 aa). 2 residues coordinate Mg(2+): Glu268 and Glu280. N(1)-(5-phospho-beta-D-ribosyl)glycinamide is bound by residues Asp287, Lys361, and 368 to 369; that span reads RR.

Belongs to the PurK/PurT family. As to quaternary structure, homodimer.

It catalyses the reaction N(1)-(5-phospho-beta-D-ribosyl)glycinamide + formate + ATP = N(2)-formyl-N(1)-(5-phospho-beta-D-ribosyl)glycinamide + ADP + phosphate + H(+). The protein operates within purine metabolism; IMP biosynthesis via de novo pathway; N(2)-formyl-N(1)-(5-phospho-D-ribosyl)glycinamide from N(1)-(5-phospho-D-ribosyl)glycinamide (formate route): step 1/1. Involved in the de novo purine biosynthesis. Catalyzes the transfer of formate to 5-phospho-ribosyl-glycinamide (GAR), producing 5-phospho-ribosyl-N-formylglycinamide (FGAR). Formate is provided by PurU via hydrolysis of 10-formyl-tetrahydrofolate. This Xanthomonas axonopodis pv. citri (strain 306) protein is Formate-dependent phosphoribosylglycinamide formyltransferase.